A 149-amino-acid chain; its full sequence is Large ribosomal subunit protein bL9 (149 aa).

This sequence belongs to the bacterial ribosomal protein bL9 family.

In terms of biological role, binds to the 23S rRNA. The protein is Large ribosomal subunit protein bL9 of Christiangramia forsetii (strain DSM 17595 / CGMCC 1.15422 / KT0803) (Gramella forsetii).